Reading from the N-terminus, the 281-residue chain is Endochitinase At2g43610 (281 aa).

Positions 1-28 are cleaved as a signal peptide; it reads MATQNAILKKALIIFLFTLTIMTGTAFS. The 38-residue stretch at 29–66 folds into the Chitin-binding type-1 domain; the sequence is QNCGTNGCKGNMCCSRWGYCGTTKAYCGTGCQSGPCNS. 4 disulfide bridges follow: Cys-31/Cys-42, Cys-36/Cys-48, Cys-41/Cys-55, and Cys-59/Cys-64. The tract at residues 86–281 is catalytic; it reads GTIASVITPA…GVTPGTNLSC (196 aa). The Proton donor role is filled by Glu-148. Residue Asn-278 is glycosylated (N-linked (GlcNAc...) asparagine).

It belongs to the glycosyl hydrolase 19 family. Chitinase class I subfamily.

The enzyme catalyses Random endo-hydrolysis of N-acetyl-beta-D-glucosaminide (1-&gt;4)-beta-linkages in chitin and chitodextrins.. This Arabidopsis thaliana (Mouse-ear cress) protein is Endochitinase At2g43610.